Reading from the N-terminus, the 253-residue chain is 2,3-bisphosphoglycerate-dependent phosphoglycerate mutase (253 aa).

Substrate contacts are provided by residues Arg-12–Asn-19, Thr-25–Gly-26, Arg-64, Glu-91–Tyr-94, Lys-102, and Arg-118–Arg-119. The active-site Tele-phosphohistidine intermediate is the His-13. Glu-91 (proton donor/acceptor) is an active-site residue. A disordered region spans residues Pro-126–Glu-148. Gly-187–Asn-188 contacts substrate.

Belongs to the phosphoglycerate mutase family. BPG-dependent PGAM subfamily.

It catalyses the reaction (2R)-2-phosphoglycerate = (2R)-3-phosphoglycerate. The protein operates within carbohydrate degradation; glycolysis; pyruvate from D-glyceraldehyde 3-phosphate: step 3/5. Functionally, catalyzes the interconversion of 2-phosphoglycerate and 3-phosphoglycerate. The polypeptide is 2,3-bisphosphoglycerate-dependent phosphoglycerate mutase (Streptomyces avermitilis (strain ATCC 31267 / DSM 46492 / JCM 5070 / NBRC 14893 / NCIMB 12804 / NRRL 8165 / MA-4680)).